The following is a 575-amino-acid chain: Probable cytochrome P450 514A1 (575 aa).

A helical transmembrane segment spans residues 4–24; that stretch reads IFTIILTITILVLSLILKDLL. Cysteine 448 contributes to the heme binding site.

The protein belongs to the cytochrome P450 family. Heme serves as cofactor.

Its subcellular location is the membrane. The sequence is that of Probable cytochrome P450 514A1 (cyp514A1) from Dictyostelium discoideum (Social amoeba).